A 142-amino-acid chain; its full sequence is MSLLPVPYTEAASLSTGSTVTIKGRPLACFLNEPYLQVDFHTEMKEESDIVFHFQVCFGRRVVMNSREYGAWKQQVESKNMPFQDGQEFELSISVLPDKYQVMVNGQSSYTFDHRIKPEAVKMVQVWRDISLTKFNVSYLKR.

Residue Ser2 is modified to N-acetylserine. The 133-residue stretch at 6–138 (VPYTEAASLS…DISLTKFNVS (133 aa)) folds into the Galectin domain.

Interacts with CEL. As to expression, expressed abundantly in the bone marrow. Expressed exclusively by eosinophils and basophils. Not detected in monocytes and neutrophils. Expressed in CD25-positive regulatory T-cells (Treg) (at protein level). Found in intestinal tissue from patients with Celiac disease, expression is directly related to the histological grade of mucosal damage and to the number of eosinophils found in the duodenal lesion (at protein level). Found in sputum of patients with eosinophilic inflammatory diseases such as asthma (at protein level).

The protein localises to the cytoplasm. Its subcellular location is the cytosol. It is found in the cytoplasmic granule. In terms of biological role, regulates immune responses through the recognition of cell-surface glycans. Essential for the anergy and suppressive function of CD25-positive regulatory T-cells (Treg). In Homo sapiens (Human), this protein is Galectin-10 (CLC).